The following is a 70-amino-acid chain: Small integral membrane protein 42 (70 aa).

The chain crosses the membrane as a helical span at residues 26–46 (LVNVLFFFTPLMTLVTLLILV).

Its subcellular location is the membrane. This Homo sapiens (Human) protein is Small integral membrane protein 42.